Reading from the N-terminus, the 268-residue chain is Phosphatidylglycerol--prolipoprotein diacylglyceryl transferase (268 aa).

The next 7 helical transmembrane spans lie at 14-34 (IIFS…LIGF), 60-80 (LLFN…VLFY), 95-115 (VWEG…AMLV), 124-144 (FWVV…MGRI), 176-196 (SQLY…NWFI), 203-223 (GSVA…VEFF), and 238-258 (ISMG…FIVL). Arg-143 provides a ligand contact to a 1,2-diacyl-sn-glycero-3-phospho-(1'-sn-glycerol).

It belongs to the Lgt family.

It localises to the cell inner membrane. It carries out the reaction L-cysteinyl-[prolipoprotein] + a 1,2-diacyl-sn-glycero-3-phospho-(1'-sn-glycerol) = an S-1,2-diacyl-sn-glyceryl-L-cysteinyl-[prolipoprotein] + sn-glycerol 1-phosphate + H(+). The protein operates within protein modification; lipoprotein biosynthesis (diacylglyceryl transfer). Catalyzes the transfer of the diacylglyceryl group from phosphatidylglycerol to the sulfhydryl group of the N-terminal cysteine of a prolipoprotein, the first step in the formation of mature lipoproteins. This is Phosphatidylglycerol--prolipoprotein diacylglyceryl transferase from Mannheimia succiniciproducens (strain KCTC 0769BP / MBEL55E).